The sequence spans 252 residues: Phosphate import ATP-binding protein PstB (252 aa).

One can recognise an ABC transporter domain in the interval 5–247 (MRGQDVKVFY…PKEQRTQDYI (243 aa)). 37–44 (GPSGCGKS) is an ATP binding site.

Belongs to the ABC transporter superfamily. Phosphate importer (TC 3.A.1.7) family. As to quaternary structure, the complex is composed of two ATP-binding proteins (PstB), two transmembrane proteins (PstC and PstA) and a solute-binding protein (PstS).

It is found in the cell inner membrane. The enzyme catalyses phosphate(out) + ATP + H2O = ADP + 2 phosphate(in) + H(+). In terms of biological role, part of the ABC transporter complex PstSACB involved in phosphate import. Responsible for energy coupling to the transport system. This chain is Phosphate import ATP-binding protein PstB, found in Bartonella quintana (strain Toulouse) (Rochalimaea quintana).